The chain runs to 526 residues: Protein ERGIC-53-like (526 aa).

An N-terminal signal peptide occupies residues 1–25; sequence MPAVSGPGPLFCLLLLLLDPHSPET. The Lumenal segment spans residues 26–462; that stretch reads GCPPLRRFEY…QPPRASSCLQ (437 aa). The L-type lectin-like domain maps to 31–252; the sequence is RRFEYKLSFK…DVLSFLTFSL (222 aa). N-linked (GlcNAc...) asparagine glycosylation is present at N75. The cysteines at positions 176 and 215 are disulfide-linked. The helical transmembrane segment at 463-483 threads the bilayer; that stretch reads PGIFLFYLLIQTVGFFGYVHF. Over 484-526 the chain is Cytoplasmic; the sequence is RQELNKSLQECLSTGSLPLGPAPHTPRALGILRRQPLPASMPA.

Highly expressed in normal and neoplastic prostate. Also expressed in cardiac atrium, salivary gland, spleen and selective cells in the CNS.

The protein resides in the endoplasmic reticulum-Golgi intermediate compartment membrane. This chain is Protein ERGIC-53-like (LMAN1L), found in Homo sapiens (Human).